The chain runs to 135 residues: Protein NrdI (135 aa).

Belongs to the NrdI family.

Its function is as follows. Probably involved in ribonucleotide reductase function. This is Protein NrdI from Brucella abortus (strain S19).